A 70-amino-acid polypeptide reads, in one-letter code: Large ribosomal subunit protein bL31 (70 aa).

Residues cysteine 16, cysteine 18, cysteine 37, and cysteine 40 each contribute to the Zn(2+) site.

This sequence belongs to the bacterial ribosomal protein bL31 family. Type A subfamily. As to quaternary structure, part of the 50S ribosomal subunit. It depends on Zn(2+) as a cofactor.

Its function is as follows. Binds the 23S rRNA. In Pasteurella multocida (strain Pm70), this protein is Large ribosomal subunit protein bL31.